The sequence spans 197 residues: MPTKSLERLILEFNKLPGVGQKSATRYAFHILNQSEEDVKNFAEALLAVKENVKKCHVCGNYCESDTCNICSDNARDHRIICVVEESKDIMILEKTTKFRGVYHVLNGRLDPLNGITPNELNIKSLLERIAKDDIEEIILATNPNIEGETTAMYLAKLMKNFGIKITKLASGIPMGGNLEFSDTATISRALDDRIEI.

Residues 56 to 71 form a C4-type zinc finger; that stretch reads CHVCGNYCESDTCNIC. One can recognise a Toprim domain in the interval 79 to 174; sequence RIICVVEESK…KITKLASGIP (96 aa).

It belongs to the RecR family.

May play a role in DNA repair. It seems to be involved in an RecBC-independent recombinational process of DNA repair. It may act with RecF and RecO. The polypeptide is Recombination protein RecR (Fusobacterium nucleatum subsp. nucleatum (strain ATCC 25586 / DSM 15643 / BCRC 10681 / CIP 101130 / JCM 8532 / KCTC 2640 / LMG 13131 / VPI 4355)).